Reading from the N-terminus, the 140-residue chain is ATP synthase epsilon chain (140 aa).

This sequence belongs to the ATPase epsilon chain family. As to quaternary structure, F-type ATPases have 2 components, CF(1) - the catalytic core - and CF(0) - the membrane proton channel. CF(1) has five subunits: alpha(3), beta(3), gamma(1), delta(1), epsilon(1). CF(0) has three main subunits: a, b and c.

The protein localises to the cell inner membrane. In terms of biological role, produces ATP from ADP in the presence of a proton gradient across the membrane. The polypeptide is ATP synthase epsilon chain (Yersinia pseudotuberculosis serotype O:1b (strain IP 31758)).